The sequence spans 497 residues: UPF0371 protein DIP2346 (497 aa).

The protein belongs to the UPF0371 family.

This chain is UPF0371 protein DIP2346, found in Corynebacterium diphtheriae (strain ATCC 700971 / NCTC 13129 / Biotype gravis).